We begin with the raw amino-acid sequence, 917 residues long: Hexokinase-2 (917 aa).

Met-1 bears the N-acetylmethionine mark. Positions 1 to 16 (MIASHLLAYFFTELNH) are mitochondrial-binding peptide (MBP). 2 Hexokinase domains span residues 16–458 (HDQV…MVTA) and 464–906 (AYQH…LITA). ATP contacts are provided by residues Arg-30 and 84–89 (DLGGTN). The tract at residues 73–207 (DGTEHGEFLA…DFDIDIVAMV (135 aa)) is hexokinase small subdomain 1. 84–88 (DLGGT) contributes to the D-glucose 6-phosphate binding site. D-glucose contacts are provided by residues 155-156 (SF), 172-173 (TK), 208-209 (ND), Asn-235, Glu-260, and 291-294 (QLFE). The segment at 208–447 (NDTVATMMTC…CDIRFLCSED (240 aa)) is hexokinase large subdomain 1. Asp-209 is a D-glucose 6-phosphate binding site. Residue 413–415 (DGS) coordinates D-glucose 6-phosphate. Residue 425–426 (KR) coordinates ATP. D-glucose 6-phosphate contacts are provided by residues Ser-449 and 532-536 (DLGGT). A hexokinase small subdomain 2 region spans residues 521–655 (DGTEKGDFLA…EFDLDVVAVV (135 aa)). 532-537 (DLGGTN) lines the ATP pocket. D-glucose is bound by residues 603–604 (SF), 620–621 (TK), and 656–657 (ND). Residues 656 to 895 (NDTVGTMMTC…CDVSFLESED (240 aa)) are hexokinase large subdomain 2. 2 residues coordinate D-glucose 6-phosphate: Asp-657 and Thr-680. Thr-680 provides a ligand contact to ATP. D-glucose is bound by residues 682 to 683 (SN), Glu-708, and 739 to 742 (QRFE). ATP is bound by residues 747 to 748 (GM), 784 to 788 (TKFLS), and 863 to 867 (TLYKL). D-glucose 6-phosphate contacts are provided by residues 861–863 (DGT) and Ser-897.

This sequence belongs to the hexokinase family. Monomer. Interacts with TIGAR; the interaction increases hexokinase activity in a hypoxia- and HIF1A-dependent manner.

It is found in the mitochondrion outer membrane. Its subcellular location is the cytoplasm. The protein localises to the cytosol. The enzyme catalyses a D-hexose + ATP = a D-hexose 6-phosphate + ADP + H(+). It catalyses the reaction D-fructose + ATP = D-fructose 6-phosphate + ADP + H(+). It carries out the reaction D-glucose + ATP = D-glucose 6-phosphate + ADP + H(+). It participates in carbohydrate metabolism; hexose metabolism. The protein operates within carbohydrate degradation; glycolysis; D-glyceraldehyde 3-phosphate and glycerone phosphate from D-glucose: step 1/4. Hexokinase activity is specifically inhibited by 2,6-disubstituted glucosamines. In terms of biological role, catalyzes the phosphorylation of hexose, such as D-glucose and D-fructose, to hexose 6-phosphate (D-glucose 6-phosphate and D-fructose 6-phosphate, respectively). Mediates the initial step of glycolysis by catalyzing phosphorylation of D-glucose to D-glucose 6-phosphate. Plays a key role in maintaining the integrity of the outer mitochondrial membrane by preventing the release of apoptogenic molecules from the intermembrane space and subsequent apoptosis. In Equus zebra (Mountain zebra), this protein is Hexokinase-2.